The primary structure comprises 374 residues: 12-oxophytodienoate reductase 2 (374 aa).

Residue Met1 is modified to N-acetylmethionine. FMN contacts are provided by residues 33–35 (PLT), Ala66, and Gln108. His185 is a substrate binding site. Catalysis depends on Tyr190, which acts as the Proton donor. Arg237 serves as a coordination point for FMN. Arg277 provides a ligand contact to substrate. FMN contacts are provided by residues 305-307 (AGG) and 328-329 (GR).

It belongs to the NADH:flavin oxidoreductase/NADH oxidase family. Requires FMN as cofactor. As to expression, expressed at highest levels in roots and cotyledons, and at lower levels in leaves, shoots and flowers (sepals, petals, maturing siliques and developing pollen).

The protein localises to the cytoplasm. It catalyses the reaction (1S,2S)-OPC-8 + NADP(+) = (9S,13S,15Z)-12-oxophyto-10,15-dienoate + NADPH + H(+). The enzyme catalyses a 4,5-didehydrojasmonate + NADPH + H(+) = a jasmonate + NADP(+). It participates in lipid metabolism; oxylipin biosynthesis. Functionally, specifically cleaves olefinic bonds in alpha,beta-unsaturated carbonyls and may be involved in detoxification or modification of these reactive compounds. May be involved in the biosynthesis or metabolism of oxylipin signaling molecules. In vitro, reduces 9R,13R-12-oxophytodienoic acid (9R,13R-OPDA) to 9R,13R-OPC-8:0, but only poorly 9S,13S-OPDA, the natural precursor of jasmonic acid (JA). Can detoxify the explosive 2,4,6-trinitrotoluene (TNT) in vitro and in vivo by catalyzing its nitroreduction to form hydroxylamino-dinitrotoluene (HADNT). Functions in an alternative and OPR3-independent pathway for JA biosynthesis. Catalyzes the NADPH-dependent reduction of 4,5-didehydrojasmonates to jasmonates. The polypeptide is 12-oxophytodienoate reductase 2 (Arabidopsis thaliana (Mouse-ear cress)).